Consider the following 437-residue polypeptide: Vacuolar cation/proton exchanger 2 (437 aa).

A disordered region spans residues 1 to 29 (MMGAEKAEGMEELELEEGGGSPSPSPMTA). Over 1–65 (MMGAEKAEGM…KWRRALTSVR (65 aa)) the chain is Cytoplasmic. A helical transmembrane segment spans residues 66-86 (VVILQAKINVLLPFGPLAVML). Residues 87-88 (HY) are Extracellular-facing. A helical transmembrane segment spans residues 89-109 (LSANHQGWVFLFSLIGITPLA). The Cytoplasmic segment spans residues 110-126 (ERLGYATEQLALYTGPT). A helical transmembrane segment spans residues 127–147 (IGGLLNATFGNATEMIISLYA). Residues 136-171 (GNATEMIISLYALKNGMIRVVQQSLLGSILSNMLLV) form a cation selection region. Over 148 to 161 (LKNGMIRVVQQSLL) the chain is Extracellular. A helical membrane pass occupies residues 162-182 (GSILSNMLLVLGCAFFAGGLV). The Cytoplasmic segment spans residues 183–194 (HPSRDQVFNKAS). The chain crosses the membrane as a helical span at residues 195–215 (AVVNSGLLLMAVLGLMFPAVL). Over 216–228 (HFTHSEVQYGKSE) the chain is Extracellular. The helical transmembrane segment at 229–249 (VSLSRFSSCIMLVAYASYLFF) threads the bilayer. Over 250–281 (QLKSQRSLYSPIGEQEEEVTEDEEEEKEITQG) the chain is Cytoplasmic. The helical transmembrane segment at 282 to 302 (EAICWLFVLTIWISILSGYLV) threads the bilayer. The Extracellular portion of the chain corresponds to 303-310 (DAIQGASE). Residues 311 to 331 (SLNMPVAFISVILLPIVGNAA) traverse the membrane as a helical segment. Residues 328-363 (GNAAEHASAIMFAMKDKLDITLGVAIGSSTQISMFV) are cation selection. The Cytoplasmic segment spans residues 332–352 (EHASAIMFAMKDKLDITLGVA). Residues 353–373 (IGSSTQISMFVIPFCVVIGWI) form a helical membrane-spanning segment. Residues 374-379 (MGQQMD) are Extracellular-facing. A helical membrane pass occupies residues 380–400 (LNFQLFETATLFITVLVVAFM). At 401–408 (LQEGTSNY) the chain is on the cytoplasmic side. A helical transmembrane segment spans residues 409-429 (FKGLMLILCYLIVAASFFVHV). Over 430 to 437 (DPDSSNNK) the chain is Extracellular.

It belongs to the Ca(2+):cation antiporter (CaCA) (TC 2.A.19) family. Cation/proton exchanger (CAX) subfamily. Expressed in roots and shoots.

The protein localises to the vacuole membrane. Functionally, vacuolar cation/proton exchanger (CAX). Translocates Ca(2+) and other metal ions into vacuoles using the proton gradient formed by H(+)-ATPase and H(+)-pyrophosphatase. The protein is Vacuolar cation/proton exchanger 2 (CAX2) of Oryza sativa subsp. japonica (Rice).